A 314-amino-acid polypeptide reads, in one-letter code: Endo-beta-N-acetylglucosaminidase (314 aa).

Residues 1-47 form the signal peptide; sequence MQFGIVAAIADGGRTARAGGSVRPPRRPPASHTAWGLPRGRPTGQPH. The disordered stretch occupies residues 14 to 54; sequence RTARAGGSVRPPRRPPASHTAWGLPRGRPTGQPHATPTKSG. The GH18 domain occupies 55–309; sequence PTSIAYVEVN…SSMTKVLYGQ (255 aa). E175 functions as the Proton donor in the catalytic mechanism.

It belongs to the glycosyl hydrolase 18 family. As to quaternary structure, monomer.

The protein resides in the secreted. It carries out the reaction an N(4)-(oligosaccharide-(1-&gt;3)-[oligosaccharide-(1-&gt;6)]-beta-D-Man-(1-&gt;4)-beta-D-GlcNAc-(1-&gt;4)-alpha-D-GlcNAc)-L-asparaginyl-[protein] + H2O = an oligosaccharide-(1-&gt;3)-[oligosaccharide-(1-&gt;6)]-beta-D-Man-(1-&gt;4)-D-GlcNAc + N(4)-(N-acetyl-beta-D-glucosaminyl)-L-asparaginyl-[protein]. In terms of biological role, cleaves asparagine-linked oligomannose and hybrid, but not complex, oligosaccharides from glycoproteins. The chain is Endo-beta-N-acetylglucosaminidase from Flavobacterium sp. (strain SK1022).